A 312-amino-acid chain; its full sequence is tRNA pseudouridine synthase B (312 aa).

The Nucleophile role is filled by Asp-48.

The protein belongs to the pseudouridine synthase TruB family. Type 1 subfamily.

The catalysed reaction is uridine(55) in tRNA = pseudouridine(55) in tRNA. Functionally, responsible for synthesis of pseudouridine from uracil-55 in the psi GC loop of transfer RNAs. This chain is tRNA pseudouridine synthase B, found in Haemophilus influenzae (strain ATCC 51907 / DSM 11121 / KW20 / Rd).